A 269-amino-acid chain; its full sequence is Small ribosomal subunit protein eS1 (269 aa).

Disordered regions lie at residues 1-20 (MAVG…SKKK) and 249-269 (AASG…QESV).

Belongs to the eukaryotic ribosomal protein eS1 family. Component of the small ribosomal subunit. Mature ribosomes consist of a small (40S) and a large (60S) subunit. The 40S subunit contains about 33 different proteins and 1 molecule of RNA (18S). The 60S subunit contains about 49 different proteins and 3 molecules of RNA (28S, 5.8S and 5S).

Its subcellular location is the cytoplasm. The polypeptide is Small ribosomal subunit protein eS1 (Anopheles darlingi (Mosquito)).